The following is a 1412-amino-acid chain: Cardiac-enriched FHL2-interacting protein (1412 aa).

7 disordered regions span residues 106-177 (VQGE…PKFA), 202-443 (VSNT…YNPP), 460-500 (LETS…SKAP), 517-848 (YSPL…TNKH), 877-923 (SEDS…VPGT), 935-1255 (EDPV…YPAT), and 1344-1412 (RQGS…EGVS). Thr-120 is subject to Phosphothreonine. Residues 135 to 145 (SSSKPISKVSS) show a composition bias toward low complexity. The segment covering 161 to 171 (RPPPSKPPALK) has biased composition (pro residues). Positions 202-212 (VSNTHQGSHQS) are enriched in polar residues. Basic and acidic residues-rich tracts occupy residues 285 to 299 (WDTH…KDIA) and 306 to 316 (KAPKHYEDMPL). At Ser-328 the chain carries Phosphoserine. Over residues 343-352 (SPSGSQSTSG) the composition is skewed to polar residues. The segment covering 378–389 (KRSKAPWRKPKT) has biased composition (basic residues). Ser-473 carries the post-translational modification Phosphoserine. Basic and acidic residues-rich tracts occupy residues 482–496 (QEKE…DSYK) and 525–538 (GFDE…DSKQ). Low complexity predominate over residues 587 to 612 (SHPTFSSPSASSQTHFCVNGEAAESN). Residues 632–641 (GHPDCRENLP) show a composition bias toward basic and acidic residues. 3 stretches are compositionally biased toward polar residues: residues 670–679 (NGLSRSVSQE), 687–697 (GFQSLPLNQKF), and 712–722 (SDSQSDFTPCR). Residues 728–741 (FSTSSSDQSFASFE) show a composition bias toward low complexity. The segment covering 753–799 (QEDRKSHVSAGDKQRDETAVEKEESQQCASRNEHRGVDEQRQEEIQR) has biased composition (basic and acidic residues). Ser-813 is modified (phosphoserine). Positions 826 to 837 (ADKDTAHTHAKD) are enriched in basic and acidic residues. 3 stretches are compositionally biased toward polar residues: residues 904–921 (ASES…NDVP), 943–953 (QDETSQQTRKG), and 1047–1066 (AETS…SPAA). Residues 1164–1175 (RRAKKLASKRRK) are compositionally biased toward basic residues. Basic and acidic residues predominate over residues 1176–1203 (SDQLLEKHTEAWEGKSFTEDTQGTERRP). The segment covering 1401–1412 (DDLEDFATEGVS) has biased composition (acidic residues).

Interacts with FHL2. Expressed in the heart and skeletal muscle (at protein level).

It is found in the cytoplasm. The protein localises to the myofibril. It localises to the sarcomere. The protein resides in the z line. Its function is as follows. Plays an important role in cardiomyocyte hypertrophy via activation of the calcineurin/NFAT signaling pathway. This Mus musculus (Mouse) protein is Cardiac-enriched FHL2-interacting protein.